Reading from the N-terminus, the 367-residue chain is Flagellar P-ring protein (367 aa).

A signal peptide spans 1 to 21; the sequence is MYVFKALAGIVLALVATLAHA.

It belongs to the FlgI family. As to quaternary structure, the basal body constitutes a major portion of the flagellar organelle and consists of four rings (L,P,S, and M) mounted on a central rod.

It localises to the periplasm. Its subcellular location is the bacterial flagellum basal body. In terms of biological role, assembles around the rod to form the L-ring and probably protects the motor/basal body from shearing forces during rotation. In Salmonella arizonae (strain ATCC BAA-731 / CDC346-86 / RSK2980), this protein is Flagellar P-ring protein.